The following is a 104-amino-acid chain: Large ribosomal subunit protein uL23 (104 aa).

The protein belongs to the universal ribosomal protein uL23 family. As to quaternary structure, part of the 50S ribosomal subunit. Contacts protein L29, and trigger factor when it is bound to the ribosome.

Its function is as follows. One of the early assembly proteins it binds 23S rRNA. One of the proteins that surrounds the polypeptide exit tunnel on the outside of the ribosome. Forms the main docking site for trigger factor binding to the ribosome. In Trichormus variabilis (strain ATCC 29413 / PCC 7937) (Anabaena variabilis), this protein is Large ribosomal subunit protein uL23.